A 178-amino-acid polypeptide reads, in one-letter code: uncharacterized protein (178 aa).

4 consecutive transmembrane segments (helical) span residues 29–49 (AATGFCGGVLWSFVAYIAYLF), 76–96 (VISIILIGVISIGAAFLYFLL), 105–125 (PGILYGLVLWLLVFFVFNPIF), and 139–159 (IITTICIYLLYGLFVGYSISF).

It is found in the cell membrane. This is an uncharacterized protein from Bacillus subtilis (strain 168).